Reading from the N-terminus, the 335-residue chain is Nucleoid-associated protein YejK (335 aa).

This sequence belongs to the YejK family.

Its subcellular location is the cytoplasm. It localises to the nucleoid. The chain is Nucleoid-associated protein YejK from Shigella flexneri.